Here is a 246-residue protein sequence, read N- to C-terminus: Probable transcriptional regulatory protein CTC_02215 (246 aa).

Belongs to the TACO1 family.

Its subcellular location is the cytoplasm. The sequence is that of Probable transcriptional regulatory protein CTC_02215 from Clostridium tetani (strain Massachusetts / E88).